A 166-amino-acid polypeptide reads, in one-letter code: NAD(P)H-quinone oxidoreductase subunit I, chloroplastic (166 aa).

4Fe-4S ferredoxin-type domains lie at Gly55–Lys84 and Leu95–Glu124. [4Fe-4S] cluster is bound by residues Cys64, Cys67, Cys70, Cys74, Cys104, Cys107, Cys110, and Cys114.

Belongs to the complex I 23 kDa subunit family. NDH is composed of at least 16 different subunits, 5 of which are encoded in the nucleus. The cofactor is [4Fe-4S] cluster.

The protein resides in the plastid. Its subcellular location is the chloroplast thylakoid membrane. It catalyses the reaction a plastoquinone + NADH + (n+1) H(+)(in) = a plastoquinol + NAD(+) + n H(+)(out). The catalysed reaction is a plastoquinone + NADPH + (n+1) H(+)(in) = a plastoquinol + NADP(+) + n H(+)(out). In terms of biological role, NDH shuttles electrons from NAD(P)H:plastoquinone, via FMN and iron-sulfur (Fe-S) centers, to quinones in the photosynthetic chain and possibly in a chloroplast respiratory chain. The immediate electron acceptor for the enzyme in this species is believed to be plastoquinone. Couples the redox reaction to proton translocation, and thus conserves the redox energy in a proton gradient. In Chaenactis santolinoides (Santolina pincushion), this protein is NAD(P)H-quinone oxidoreductase subunit I, chloroplastic.